The sequence spans 101 residues: Parathymosin (101 aa).

A disordered region spans residues 1 to 101 (MSEKSVEAAA…RQKTENGASA (101 aa)). An N-acetylserine modification is found at Ser-2. Ser-2 is modified (phosphoserine). An N6-acetyllysine modification is found at Lys-4. A phosphoserine mark is found at Ser-5 and Ser-13. A compositionally biased stretch (basic and acidic residues) spans 13–37 (SAKDLKEKKDKVEEKAGRKERKKEV). The residue at position 15 (Lys-15) is an N6-acetyllysine. Over residues 38–74 (VEEEENGAEEEEEETAEDGEDDDEGDEEDEEEEEEDE) the composition is skewed to acidic residues. Thr-52 bears the Phosphothreonine mark. Lys-91 is modified (N6-acetyllysine).

The protein belongs to the pro/parathymosin family.

Its function is as follows. Parathymosin may mediate immune function by blocking the effect of prothymosin alpha which confers resistance to certain opportunistic infections. The sequence is that of Parathymosin (Ptms) from Mus musculus (Mouse).